The chain runs to 569 residues: Probable diguanylate cyclase DgcQ (569 aa).

2 helical membrane passes run 25–45 (LGPG…STLL) and 365–385 (IALT…WYVI). One can recognise a GGDEF domain in the interval 433–568 (HPFSVIQVDL…GRNRVCASDN (136 aa)). Residue aspartate 441 coordinates Mg(2+). Residues asparagine 449, histidine 454, and aspartate 458 each coordinate substrate. Mg(2+) is bound at residue glutamate 484. Catalysis depends on glutamate 484, which acts as the Proton acceptor.

As to quaternary structure, homodimer. Mg(2+) is required as a cofactor.

The protein resides in the cell inner membrane. The catalysed reaction is 2 GTP = 3',3'-c-di-GMP + 2 diphosphate. It functions in the pathway glycan metabolism; bacterial cellulose biosynthesis. It participates in purine metabolism; 3',5'-cyclic di-GMP biosynthesis. Catalyzes the synthesis of cyclic-di-GMP (c-di-GMP) via the condensation of 2 GTP molecules. Cyclic-di-GMP is a second messenger which controls cell surface-associated traits in bacteria. Involved in the regulation of cellulose production. This is Probable diguanylate cyclase DgcQ from Shigella sonnei (strain Ss046).